The following is a 387-amino-acid chain: Exodeoxyribonuclease 7 large subunit (387 aa).

This sequence belongs to the XseA family. In terms of assembly, heterooligomer composed of large and small subunits.

It localises to the cytoplasm. It carries out the reaction Exonucleolytic cleavage in either 5'- to 3'- or 3'- to 5'-direction to yield nucleoside 5'-phosphates.. Its function is as follows. Bidirectionally degrades single-stranded DNA into large acid-insoluble oligonucleotides, which are then degraded further into small acid-soluble oligonucleotides. This chain is Exodeoxyribonuclease 7 large subunit, found in Parasynechococcus marenigrum (strain WH8102).